Consider the following 307-residue polypeptide: Probable porphobilinogen deaminase (307 aa).

The residue at position 240 (Cys-240) is an S-(dipyrrolylmethanemethyl)cysteine.

This sequence belongs to the HMBS family. Dipyrromethane serves as cofactor.

The enzyme catalyses 4 porphobilinogen + H2O = hydroxymethylbilane + 4 NH4(+). It participates in porphyrin-containing compound metabolism; protoporphyrin-IX biosynthesis; coproporphyrinogen-III from 5-aminolevulinate: step 2/4. Tetrapolymerization of the monopyrrole PBG into the hydroxymethylbilane pre-uroporphyrinogen in several discrete steps. The polypeptide is Probable porphobilinogen deaminase (hemC) (Aeropyrum pernix (strain ATCC 700893 / DSM 11879 / JCM 9820 / NBRC 100138 / K1)).